A 436-amino-acid polypeptide reads, in one-letter code: UPF0597 protein YhaM (436 aa).

The protein belongs to the UPF0597 family.

The chain is UPF0597 protein YhaM from Escherichia coli O45:K1 (strain S88 / ExPEC).